We begin with the raw amino-acid sequence, 1167 residues long: RNA-directed RNA polymerase (1167 aa).

The RdRp catalytic domain maps to 553–735 (LTYGILAEAT…KALASYTGLE (183 aa)).

Belongs to the reoviridae RNA-directed RNA polymerase family. In terms of assembly, interacts with VP3 (Potential). Interacts with VP2 (Potential). Interacts with NSP5; this interaction is probably necessary for the formation of functional virus factories.

It is found in the virion. The catalysed reaction is RNA(n) + a ribonucleoside 5'-triphosphate = RNA(n+1) + diphosphate. Its function is as follows. RNA-directed RNA polymerase that is involved in both transcription and genome replication. Together with VP3 capping enzyme, forms an enzyme complex positioned near the channels situated at each of the five-fold vertices of the core. Following infection, the outermost layer of the virus is lost, leaving a double-layered particle (DLP) made up of the core and VP6 shell. VP1 then catalyzes the transcription of fully conservative plus-strand genomic RNAs that are extruded through the DLP's channels into the cytoplasm where they function as mRNAs for translation of viral proteins. One copy of each of the viral (+)RNAs is also recruited during core assembly, together with newly synthesized polymerase complexes and VP2. The polymerase of these novo-formed particles catalyzes the synthesis of complementary minus-strands leading to dsDNA formation. To do so, the polymerase specifically recognizes conserved 3' sequence(s) in plus-strand RNA templates. Once dsRNA synthesis is complete, the polymerase switches to the transcriptional mode, thus providing secondary transcription. In Rotavirus X (isolate RVX/Human/Bangladesh/NADRV-B219/2002/GXP[X]) (RV ADRV-N), this protein is RNA-directed RNA polymerase.